A 273-amino-acid chain; its full sequence is 3-methyl-2-oxobutanoate hydroxymethyltransferase (273 aa).

Mg(2+)-binding residues include Asp-53 and Asp-92. 3-methyl-2-oxobutanoate-binding positions include 53-54 (DS), Asp-92, and Lys-122. Glu-124 serves as a coordination point for Mg(2+). The Proton acceptor role is filled by Glu-191.

This sequence belongs to the PanB family. As to quaternary structure, homodecamer; pentamer of dimers. Mg(2+) is required as a cofactor.

It localises to the cytoplasm. It carries out the reaction 3-methyl-2-oxobutanoate + (6R)-5,10-methylene-5,6,7,8-tetrahydrofolate + H2O = 2-dehydropantoate + (6S)-5,6,7,8-tetrahydrofolate. Its pathway is cofactor biosynthesis; (R)-pantothenate biosynthesis; (R)-pantoate from 3-methyl-2-oxobutanoate: step 1/2. Catalyzes the reversible reaction in which hydroxymethyl group from 5,10-methylenetetrahydrofolate is transferred onto alpha-ketoisovalerate to form ketopantoate. The sequence is that of 3-methyl-2-oxobutanoate hydroxymethyltransferase from Porphyromonas gingivalis (strain ATCC 33277 / DSM 20709 / CIP 103683 / JCM 12257 / NCTC 11834 / 2561).